A 269-amino-acid chain; its full sequence is Staphylococcal secretory antigen ssaA2 (269 aa).

The signal sequence occupies residues 1–27 (MKKIATATIATAGFATIAIASGNQAHA). A run of 7 repeats spans residues 83–85 (YNN), 88–90 (YNN), 91–93 (YNN), 97–99 (YNN), 103–105 (YNN), 106–108 (YSN), and 115–117 (YNN). The segment at 83-115 (YNNYNYNNYNNGYSYNNYSRYNNYSNNNQSYNY) is 7 X 3 AA repeats of Y-[NS]-N. Positions 148-269 (MAPSSNGRSI…SQAAGYNFIH (122 aa)) constitute a Peptidase C51 domain.

It localises to the secreted. Its function is as follows. Not known; immunogenic protein. This Staphylococcus aureus (strain MSSA476) protein is Staphylococcal secretory antigen ssaA2 (ssaA2).